The chain runs to 395 residues: 1-deoxy-D-xylulose 5-phosphate reductoisomerase (395 aa).

NADPH is bound by residues T15, G16, S17, I18, G41, N43, and N126. Residue K127 participates in 1-deoxy-D-xylulose 5-phosphate binding. Residue E128 participates in NADPH binding. D152 contributes to the Mn(2+) binding site. The 1-deoxy-D-xylulose 5-phosphate site is built by S153, E154, S178, and H201. E154 is a Mn(2+) binding site. G207 lines the NADPH pocket. Residues S214, N219, K220, and E223 each coordinate 1-deoxy-D-xylulose 5-phosphate. E223 is a binding site for Mn(2+).

It belongs to the DXR family. It depends on Mg(2+) as a cofactor. Mn(2+) serves as cofactor.

It carries out the reaction 2-C-methyl-D-erythritol 4-phosphate + NADP(+) = 1-deoxy-D-xylulose 5-phosphate + NADPH + H(+). Its pathway is isoprenoid biosynthesis; isopentenyl diphosphate biosynthesis via DXP pathway; isopentenyl diphosphate from 1-deoxy-D-xylulose 5-phosphate: step 1/6. Functionally, catalyzes the NADPH-dependent rearrangement and reduction of 1-deoxy-D-xylulose-5-phosphate (DXP) to 2-C-methyl-D-erythritol 4-phosphate (MEP). This is 1-deoxy-D-xylulose 5-phosphate reductoisomerase from Ruegeria sp. (strain TM1040) (Silicibacter sp.).